We begin with the raw amino-acid sequence, 64 residues long: Small, acid-soluble spore protein D (64 aa).

It belongs to the alpha/beta-type SASP family.

SASP are bound to spore DNA. They are double-stranded DNA-binding proteins that cause DNA to change to an a-like conformation. They protect the DNA backbone from chemical and enzymatic cleavage and are thus involved in dormant spore's high resistance to UV light. The chain is Small, acid-soluble spore protein D (sspD) from Bacillus subtilis (strain 168).